The following is a 425-amino-acid chain: MALIDAIHAREILDSRGNPTVEVEVLLTDGSLGRAAVPSGASTGEFEAVERRDGDKKRYGGKGVLDAVAAVEGIAEELEGEFAADQRAVDRAMRDLDGTPNKGKLGANAILGVSMAVAVAAAQASDLMLYKYLGGPNSHVLPVPMMNILNGGAHADSNVDIQEFMIAPIGAPSFREALRWGTEVYHALKTVLQEKGLSTGLGDEGGFAPSLESNRAALDLIAEAVTKAGYRLGEDIALALDVASSEFFDKGSYTFEGQQRSAEEMAAYYTELVDNYPIVSIEDPLDEDDWEGWQHLTAQLGDRVQLVGDDLFVTNVERLQRGIDEKAGNALLVKVNQIGSLTETFDAISLAQRHMFHCMISHRSGETEDTFIADLAVATNAGQIKTGAPARSDRVAKYNQLLRIEEDLADAAVYAGRSAFPRFRG.

Residue glutamine 162 coordinates (2R)-2-phosphoglycerate. Glutamate 204 functions as the Proton donor in the catalytic mechanism. Residues aspartate 241, glutamate 282, and aspartate 309 each contribute to the Mg(2+) site. Positions 334, 363, 364, and 385 each coordinate (2R)-2-phosphoglycerate. Lysine 334 serves as the catalytic Proton acceptor.

It belongs to the enolase family. It depends on Mg(2+) as a cofactor.

The protein localises to the cytoplasm. It localises to the secreted. The protein resides in the cell surface. The enzyme catalyses (2R)-2-phosphoglycerate = phosphoenolpyruvate + H2O. Its pathway is carbohydrate degradation; glycolysis; pyruvate from D-glyceraldehyde 3-phosphate: step 4/5. Its function is as follows. Catalyzes the reversible conversion of 2-phosphoglycerate (2-PG) into phosphoenolpyruvate (PEP). It is essential for the degradation of carbohydrates via glycolysis. This chain is Enolase, found in Micrococcus luteus (strain ATCC 4698 / DSM 20030 / JCM 1464 / CCM 169 / CCUG 5858 / IAM 1056 / NBRC 3333 / NCIMB 9278 / NCTC 2665 / VKM Ac-2230) (Micrococcus lysodeikticus).